A 272-amino-acid chain; its full sequence is Cytosolic Fe-S cluster assembly factor NUBP2 (272 aa).

Position 23-30 (23-30 (GKGGVGKS)) interacts with ATP. [4Fe-4S] cluster contacts are provided by cysteine 197 and cysteine 200.

It belongs to the Mrp/NBP35 ATP-binding proteins family. NUBP2/CFD1 subfamily. In terms of assembly, heterotetramer of 2 NUBP1 and 2 NUBP2 chains. Requires [4Fe-4S] cluster as cofactor.

It localises to the cytoplasm. Its function is as follows. Component of the cytosolic iron-sulfur (Fe/S) protein assembly (CIA) machinery. Required for maturation of extramitochondrial Fe-S proteins. The NUBP1-NUBP2 heterotetramer forms a Fe-S scaffold complex, mediating the de novo assembly of an Fe-S cluster and its transfer to target apoproteins. This is Cytosolic Fe-S cluster assembly factor NUBP2 from Gallus gallus (Chicken).